A 172-amino-acid polypeptide reads, in one-letter code: Peptide deformylase (172 aa).

Fe cation-binding residues include cysteine 94 and histidine 136. Residue glutamate 137 is part of the active site. Histidine 140 is a binding site for Fe cation.

It belongs to the polypeptide deformylase family. It depends on Fe(2+) as a cofactor.

The catalysed reaction is N-terminal N-formyl-L-methionyl-[peptide] + H2O = N-terminal L-methionyl-[peptide] + formate. Removes the formyl group from the N-terminal Met of newly synthesized proteins. Requires at least a dipeptide for an efficient rate of reaction. N-terminal L-methionine is a prerequisite for activity but the enzyme has broad specificity at other positions. The protein is Peptide deformylase of Pelagibacter ubique (strain HTCC1062).